A 358-amino-acid chain; its full sequence is UDP-N-acetylglucosamine--N-acetylmuramyl-(pentapeptide) pyrophosphoryl-undecaprenol N-acetylglucosamine transferase (358 aa).

3 residues coordinate UDP-N-acetyl-alpha-D-glucosamine: R166, S196, and Q291.

Belongs to the glycosyltransferase 28 family. MurG subfamily.

The protein resides in the cell membrane. The catalysed reaction is Mur2Ac(oyl-L-Ala-gamma-D-Glu-L-Lys-D-Ala-D-Ala)-di-trans,octa-cis-undecaprenyl diphosphate + UDP-N-acetyl-alpha-D-glucosamine = beta-D-GlcNAc-(1-&gt;4)-Mur2Ac(oyl-L-Ala-gamma-D-Glu-L-Lys-D-Ala-D-Ala)-di-trans,octa-cis-undecaprenyl diphosphate + UDP + H(+). It participates in cell wall biogenesis; peptidoglycan biosynthesis. In terms of biological role, cell wall formation. Catalyzes the transfer of a GlcNAc subunit on undecaprenyl-pyrophosphoryl-MurNAc-pentapeptide (lipid intermediate I) to form undecaprenyl-pyrophosphoryl-MurNAc-(pentapeptide)GlcNAc (lipid intermediate II). The protein is UDP-N-acetylglucosamine--N-acetylmuramyl-(pentapeptide) pyrophosphoryl-undecaprenol N-acetylglucosamine transferase of Staphylococcus saprophyticus subsp. saprophyticus (strain ATCC 15305 / DSM 20229 / NCIMB 8711 / NCTC 7292 / S-41).